The following is a 380-amino-acid chain: Cytochrome b (380 aa).

4 helical membrane-spanning segments follow: residues 33 to 53 (FGSL…FLAM), 77 to 98 (WLIR…FIHV), 113 to 133 (WNIG…GYVL), and 178 to 198 (FFAF…VHLL). Heme b contacts are provided by H83 and H97. Heme b is bound by residues H182 and H196. Residue H201 participates in a ubiquinone binding. 4 helical membrane-spanning segments follow: residues 226-246 (IKDL…VLFF), 288-308 (LGGV…PLLN), 320-340 (LTQF…WIGG), and 347-367 (FTTI…VLMP).

It belongs to the cytochrome b family. In terms of assembly, the cytochrome bc1 complex contains 11 subunits: 3 respiratory subunits (MT-CYB, CYC1 and UQCRFS1), 2 core proteins (UQCRC1 and UQCRC2) and 6 low-molecular weight proteins (UQCRH/QCR6, UQCRB/QCR7, UQCRQ/QCR8, UQCR10/QCR9, UQCR11/QCR10 and a cleavage product of UQCRFS1). This cytochrome bc1 complex then forms a dimer. The cofactor is heme b.

The protein localises to the mitochondrion inner membrane. Component of the ubiquinol-cytochrome c reductase complex (complex III or cytochrome b-c1 complex) that is part of the mitochondrial respiratory chain. The b-c1 complex mediates electron transfer from ubiquinol to cytochrome c. Contributes to the generation of a proton gradient across the mitochondrial membrane that is then used for ATP synthesis. The protein is Cytochrome b (MT-CYB) of Thomasomys notatus (Distinguished oldfield mouse).